Consider the following 413-residue polypeptide: Arginine biosynthesis bifunctional protein ArgJ (413 aa).

Substrate contacts are provided by T158, K184, T195, E285, N408, and S413. The Nucleophile role is filled by T195.

Belongs to the ArgJ family. In terms of assembly, heterotetramer of two alpha and two beta chains.

Its subcellular location is the cytoplasm. The catalysed reaction is N(2)-acetyl-L-ornithine + L-glutamate = N-acetyl-L-glutamate + L-ornithine. The enzyme catalyses L-glutamate + acetyl-CoA = N-acetyl-L-glutamate + CoA + H(+). The protein operates within amino-acid biosynthesis; L-arginine biosynthesis; L-ornithine and N-acetyl-L-glutamate from L-glutamate and N(2)-acetyl-L-ornithine (cyclic): step 1/1. It functions in the pathway amino-acid biosynthesis; L-arginine biosynthesis; N(2)-acetyl-L-ornithine from L-glutamate: step 1/4. Functionally, catalyzes two activities which are involved in the cyclic version of arginine biosynthesis: the synthesis of N-acetylglutamate from glutamate and acetyl-CoA as the acetyl donor, and of ornithine by transacetylation between N(2)-acetylornithine and glutamate. The protein is Arginine biosynthesis bifunctional protein ArgJ of Brucella melitensis biotype 1 (strain ATCC 23456 / CCUG 17765 / NCTC 10094 / 16M).